Reading from the N-terminus, the 230-residue chain is Ion-translocating oxidoreductase complex subunit E (230 aa).

The next 6 helical transmembrane spans lie at 18–38 (ALVQ…ATNA), 39–59 (LGLG…VSAL), 63–83 (TPAE…VSAV), 86–106 (LINA…PLIV), 125–145 (WLSA…MFVL), and 182–202 (PFLL…MLAV).

Belongs to the NqrDE/RnfAE family. In terms of assembly, the complex is composed of six subunits: RsxA, RsxB, RsxC, RsxD, RsxE and RsxG.

It is found in the cell inner membrane. Part of a membrane-bound complex that couples electron transfer with translocation of ions across the membrane. Required to maintain the reduced state of SoxR. This Salmonella newport (strain SL254) protein is Ion-translocating oxidoreductase complex subunit E.